The chain runs to 411 residues: Imidazolonepropionase (411 aa).

Residues His78 and His80 each coordinate Fe(3+). The Zn(2+) site is built by His78 and His80. 4-imidazolone-5-propanoate contacts are provided by Arg87, Tyr150, and His183. Tyr150 contributes to the N-formimidoyl-L-glutamate binding site. Residue His248 coordinates Fe(3+). His248 contacts Zn(2+). Position 251 (Gln251) interacts with 4-imidazolone-5-propanoate. Position 322 (Asp322) interacts with Fe(3+). Asp322 is a binding site for Zn(2+). N-formimidoyl-L-glutamate contacts are provided by Asn324 and Gly326. Thr327 provides a ligand contact to 4-imidazolone-5-propanoate.

It belongs to the metallo-dependent hydrolases superfamily. HutI family. The cofactor is Zn(2+). It depends on Fe(3+) as a cofactor.

The protein localises to the cytoplasm. The catalysed reaction is 4-imidazolone-5-propanoate + H2O = N-formimidoyl-L-glutamate. The protein operates within amino-acid degradation; L-histidine degradation into L-glutamate; N-formimidoyl-L-glutamate from L-histidine: step 3/3. Catalyzes the hydrolytic cleavage of the carbon-nitrogen bond in imidazolone-5-propanoate to yield N-formimidoyl-L-glutamate. It is the third step in the universal histidine degradation pathway. The sequence is that of Imidazolonepropionase from Flavobacterium psychrophilum (strain ATCC 49511 / DSM 21280 / CIP 103535 / JIP02/86).